We begin with the raw amino-acid sequence, 368 residues long: Agmatine deiminase (368 aa).

The Amidino-cysteine intermediate role is filled by cysteine 357.

Belongs to the agmatine deiminase family. Homodimer.

It catalyses the reaction agmatine + H2O = N-carbamoylputrescine + NH4(+). It functions in the pathway amine and polyamine biosynthesis; putrescine biosynthesis via agmatine pathway; N-carbamoylputrescine from agmatine: step 1/1. Its function is as follows. Mediates the hydrolysis of agmatine into N-carbamoylputrescine in the arginine decarboxylase (ADC) pathway of putrescine biosynthesis, a basic polyamine. The protein is Agmatine deiminase of Pseudomonas syringae pv. tomato (strain ATCC BAA-871 / DC3000).